The chain runs to 151 residues: Secreted RxLR effector protein 30 (151 aa).

The N-terminal stretch at 1–19 (MRSSTILIVLGIAILAVNG) is a signal peptide. The RxLR-dEER motif lies at 38–53 (RLLRSTSTEHETDEER).

It belongs to the RxLR effector family.

The protein localises to the secreted. It localises to the host nucleus. Its function is as follows. Effector that acts as a broad suppressor of cell death to interrupt plant immunity. Inhibits cell death induced by cell death-inducing proteins, including the PAMP elicitor INF1 from P.infestans. This chain is Secreted RxLR effector protein 30, found in Plasmopara viticola (Downy mildew of grapevine).